The chain runs to 31 residues: leu operon leader peptide (31 aa).

In terms of biological role, involved in control of the biosynthesis of leucine. This chain is leu operon leader peptide (leuL), found in Buchnera aphidicola subsp. Rhopalosiphum padi.